Reading from the N-terminus, the 218-residue chain is Probable nicotinate-nucleotide adenylyltransferase (218 aa).

It belongs to the NadD family.

The catalysed reaction is nicotinate beta-D-ribonucleotide + ATP + H(+) = deamido-NAD(+) + diphosphate. Its pathway is cofactor biosynthesis; NAD(+) biosynthesis; deamido-NAD(+) from nicotinate D-ribonucleotide: step 1/1. Its function is as follows. Catalyzes the reversible adenylation of nicotinate mononucleotide (NaMN) to nicotinic acid adenine dinucleotide (NaAD). This is Probable nicotinate-nucleotide adenylyltransferase from Sodalis glossinidius (strain morsitans).